A 656-amino-acid polypeptide reads, in one-letter code: Squalene-hopene cyclase (656 aa).

Residues 68–110 (EQKIANYLRRCQSREHWGWPVYYGGEFNISASVQAYFALKMTG) form a PFTB 1 repeat. D396 acts as the Proton donor in catalysis. PFTB repeat units lie at residues 417-459 (LDRA…ALLD), 485-525 (IERG…NASG), 533-582 (VLKC…GLMA), and 591-634 (VKRG…QFFP).

It belongs to the terpene cyclase/mutase family.

The catalysed reaction is squalene = hop-22(29)-ene. It catalyses the reaction squalene + H2O = hopan-22-ol. Functionally, squalene cyclase that catalyzes the oxygen-independent cyclization of squalene into hopanoids, a class of cyclic triterpenoids including hop-22(29)-ene, hop-17(21)-ene, hop-21(22)-ene, and hopan-22-ol. In Schizosaccharomyces japonicus (strain yFS275 / FY16936) (Fission yeast), this protein is Squalene-hopene cyclase.